We begin with the raw amino-acid sequence, 494 residues long: Tripartite motif-containing protein 5 (494 aa).

Residue Ala2 is modified to N-acetylalanine. Residues 15–59 (CPICLELLTQPLSLDCGHSFCQACLTANHKTSMPDEGERSCPVCR) form an RING-type zinc finger. A Phosphoserine modification is found at Ser86. The B box-type zinc finger occupies 91–133 (QKVDHCARHGEKLLLFCREDRKVICWLCERSQEHRGHHTFLTE). Zn(2+)-binding residues include Cys96, His99, Cys118, and His124. Positions 132-241 (TEEVAQEYQM…LISDLEHRLQ (110 aa)) form a coiled coil. The segment at 186 to 199 (FEQLRHILDWVESN) is required for interaction with GABARAP and for autophagy. One can recognise a B30.2/SPRY domain in the interval 282–494 (LKVMLEVLRE…VPMTLCSPSS (213 aa)).

It belongs to the TRIM/RBCC family. Can form homodimers and homotrimers. In addition to lower-order dimerization, also exhibits a higher-order multimerization and both low- and high-order multimerizations are essential for its restriction activity. Interacts with BTBD1 and BTBD2. Interacts with PSMC4, PSMC5, PSMD7 and HSPA8/HSC70. Interacts (via B30.2/SPRY domain) with HSPA1A/B. Interacts with PSMC2, MAP3K7/TAK1, TAB2 and TAB3. Interacts with SQSTM1. Interacts with TRIM6 and TRIM34. Interacts with ULK1 (phosphorylated form), GABARAP, GABARAPL1, GABARAPL2, MAP1LC3A, MAP1LC3C and BECN1. Post-translationally, degraded in a proteasome-independent fashion in the absence of viral infection but in a proteasome-dependent fashion following exposure to restriction sensitive virus. Autoubiquitinated in a RING finger- and UBE2D2-dependent manner. Monoubiquitinated by TRIM21. Deubiquitinated by Yersinia YopJ. Ubiquitination may not lead to proteasomal degradation.

It is found in the cytoplasm. It localises to the nucleus. It carries out the reaction S-ubiquitinyl-[E2 ubiquitin-conjugating enzyme]-L-cysteine + [acceptor protein]-L-lysine = [E2 ubiquitin-conjugating enzyme]-L-cysteine + N(6)-ubiquitinyl-[acceptor protein]-L-lysine.. The protein operates within protein modification; protein ubiquitination. Its function is as follows. Capsid-specific restriction factor that prevents infection from non-host-adapted retroviruses. Blocks viral replication early in the life cycle, after viral entry but before reverse transcription. In addition to acting as a capsid-specific restriction factor, also acts as a pattern recognition receptor that activates innate immune signaling in response to the retroviral capsid lattice. Binding to the viral capsid triggers its E3 ubiquitin ligase activity, and in concert with the heterodimeric ubiquitin conjugating enzyme complex UBE2V1-UBE2N (also known as UBC13-UEV1A complex) generates 'Lys-63'-linked polyubiquitin chains, which in turn are catalysts in the autophosphorylation of the MAP3K7/TAK1 complex (includes TAK1, TAB2, and TAB3). Activation of the MAP3K7/TAK1 complex by autophosphorylation results in the induction and expression of NF-kappa-B and MAPK-responsive inflammatory genes, thereby leading to an innate immune response in the infected cell. Plays a role in regulating autophagy through activation of autophagy regulator BECN1 by causing its dissociation from its inhibitors BCL2 and TAB2. This Hoolock hoolock (Western hoolock gibbon) protein is Tripartite motif-containing protein 5 (TRIM5).